The following is a 323-amino-acid chain: Cuticle collagen 39 (323 aa).

The signal sequence occupies residues Met1–Ile28. Residues Gln80–Asn89 are compositionally biased toward polar residues. The disordered stretch occupies residues Gln80–Arg293. Triple-helical region regions lie at residues Gly93–Lys125, Gly138–Arg200, and Gly203–Asp265. The segment covering Gly108–Gly117 has biased composition (gly residues). Positions Pro136–Pro146 are enriched in low complexity. Residues Gly159–Gly168 are compositionally biased toward gly residues. Low complexity predominate over residues Pro169–Pro191. The span at Gly224 to Gly233 shows a compositional bias: gly residues. A compositionally biased stretch (low complexity) spans Pro234 to Ala267.

It belongs to the cuticular collagen family. As to quaternary structure, collagen polypeptide chains are complexed within the cuticle by disulfide bonds and other types of covalent cross-links.

Functionally, nematode cuticles are composed largely of collagen-like proteins. The cuticle functions both as an exoskeleton and as a barrier to protect the worm from its environment. This is Cuticle collagen 39 (col-39) from Caenorhabditis elegans.